Reading from the N-terminus, the 132-residue chain is Translation initiation factor 5A (132 aa).

Position 36 is a hypusine (lysine 36).

It belongs to the eIF-5A family.

The protein localises to the cytoplasm. Functions by promoting the formation of the first peptide bond. In Methanosphaera stadtmanae (strain ATCC 43021 / DSM 3091 / JCM 11832 / MCB-3), this protein is Translation initiation factor 5A.